The sequence spans 373 residues: MKIVADENIPFVNELFEPIGEILLRPGREITPADVKNADILLVRSVTPVNAALLEGSKVQFVGTCTIGTDHLDKAYLDERDIAYSSAPGCNAGGVVQYALSAMAVLGLLQDSPSKDFKVAVVGCGNVGSRVYRTLSALGYDCIGVDPFLDTSTIPHLQPFEAIYDCDLICCHTPLTRSGPAPTEHMFNTDVFNHLKSGATLLNAGRGGVIDNRALLQYLNTHNDLTVVLDVWESEPDILVELLDAVALGSTHIAGYSYEGRINGSLMIHRALIDYLLAHGEHPEDTRRAIEAYVAKDKETINVTSFADAVLATYDVRDDDALLRQAVQGLPASFDMLRKQYRKRREFSHYQIEAAPPKLMPLLQSLGYGVVAK.

Residues Ser45 and Thr66 each coordinate substrate. 2 residues coordinate NAD(+): Asp146 and Thr173. Arg206 is a catalytic residue. An NAD(+)-binding site is contributed by Asp230. Glu235 is a catalytic residue. His252 (proton donor) is an active-site residue. An NAD(+)-binding site is contributed by Gly255. Tyr256 contributes to the substrate binding site.

This sequence belongs to the D-isomer specific 2-hydroxyacid dehydrogenase family. PdxB subfamily. In terms of assembly, homodimer.

Its subcellular location is the cytoplasm. It carries out the reaction 4-phospho-D-erythronate + NAD(+) = (R)-3-hydroxy-2-oxo-4-phosphooxybutanoate + NADH + H(+). The protein operates within cofactor biosynthesis; pyridoxine 5'-phosphate biosynthesis; pyridoxine 5'-phosphate from D-erythrose 4-phosphate: step 2/5. Its function is as follows. Catalyzes the oxidation of erythronate-4-phosphate to 3-hydroxy-2-oxo-4-phosphonooxybutanoate. The chain is Erythronate-4-phosphate dehydrogenase from Saccharophagus degradans (strain 2-40 / ATCC 43961 / DSM 17024).